The chain runs to 81 residues: Photosystem I iron-sulfur center (81 aa).

4Fe-4S ferredoxin-type domains lie at 1–31 (MSHS…MVPW) and 39–68 (IASS…IRVY). Residues Cys-11, Cys-14, Cys-17, Cys-21, Cys-48, Cys-51, Cys-54, and Cys-58 each contribute to the [4Fe-4S] cluster site.

In terms of assembly, the cyanobacterial PSI reaction center is composed of one copy each of PsaA,B,C,D,E,F,I,J,K,L,M and X, and forms trimeric complexes. It depends on [4Fe-4S] cluster as a cofactor.

Its subcellular location is the cellular thylakoid membrane. The enzyme catalyses reduced [plastocyanin] + hnu + oxidized [2Fe-2S]-[ferredoxin] = oxidized [plastocyanin] + reduced [2Fe-2S]-[ferredoxin]. Functionally, apoprotein for the two 4Fe-4S centers FA and FB of photosystem I (PSI); essential for photochemical activity. FB is the terminal electron acceptor of PSI, donating electrons to ferredoxin. The C-terminus interacts with PsaA/B/D and helps assemble the protein into the PSI complex. Required for binding of PsaD and PsaE to PSI. PSI is a plastocyanin/cytochrome c6-ferredoxin oxidoreductase, converting photonic excitation into a charge separation, which transfers an electron from the donor P700 chlorophyll pair to the spectroscopically characterized acceptors A0, A1, FX, FA and FB in turn. This Microcystis aeruginosa (strain NIES-843 / IAM M-2473) protein is Photosystem I iron-sulfur center.